The sequence spans 447 residues: GTPase Der (447 aa).

2 consecutive EngA-type G domains span residues 3–167 (PVIA…ALPE) and 180–353 (IRLA…KSAN). Residues 9–16 (GRPNVGKS), 56–60 (DTGGF), 119–122 (NKAE), 186–193 (GRPNVGKS), 233–237 (DTAGL), and 298–301 (NKWD) each bind GTP. In terms of domain architecture, KH-like spans 354–438 (RKMPTPVLTR…PLRIEMKTSS (85 aa)).

The protein belongs to the TRAFAC class TrmE-Era-EngA-EngB-Septin-like GTPase superfamily. EngA (Der) GTPase family. Associates with the 50S ribosomal subunit.

Functionally, GTPase that plays an essential role in the late steps of ribosome biogenesis. The chain is GTPase Der from Acidovorax ebreus (strain TPSY) (Diaphorobacter sp. (strain TPSY)).